The primary structure comprises 120 residues: NAD(P)H-quinone oxidoreductase subunit 3 (120 aa).

Transmembrane regions (helical) follow at residues 10 to 30, 64 to 84, and 89 to 109; these read FLGF…TNLI, MFAL…PWAV, and LGLL…IALA.

The protein belongs to the complex I subunit 3 family. In terms of assembly, NDH-1 can be composed of about 15 different subunits; different subcomplexes with different compositions have been identified which probably have different functions.

It localises to the cellular thylakoid membrane. It catalyses the reaction a plastoquinone + NADH + (n+1) H(+)(in) = a plastoquinol + NAD(+) + n H(+)(out). The catalysed reaction is a plastoquinone + NADPH + (n+1) H(+)(in) = a plastoquinol + NADP(+) + n H(+)(out). In terms of biological role, NDH-1 shuttles electrons from an unknown electron donor, via FMN and iron-sulfur (Fe-S) centers, to quinones in the respiratory and/or the photosynthetic chain. The immediate electron acceptor for the enzyme in this species is believed to be plastoquinone. Couples the redox reaction to proton translocation, and thus conserves the redox energy in a proton gradient. Cyanobacterial NDH-1 also plays a role in inorganic carbon-concentration. The chain is NAD(P)H-quinone oxidoreductase subunit 3 from Prochlorococcus marinus (strain MIT 9215).